Here is a 59-residue protein sequence, read N- to C-terminus: Potassium channel toxin alpha-KTx 4.1 (59 aa).

The N-terminal stretch at 1-22 (MKAFYGILIIFILISMIDLSKQ) is a signal peptide. 3 disulfides stabilise this stretch: Cys-29-Cys-50, Cys-35-Cys-55, and Cys-39-Cys-57. The interaction with Ca(2+)-activated K(+) channels stretch occupies residues 48 to 55 (GKCMNGKC).

The protein belongs to the short scorpion toxin superfamily. Potassium channel inhibitor family. Alpha-KTx 04 subfamily. In terms of tissue distribution, expressed by the venom gland.

The protein localises to the secreted. Potently blocks Kv1.1/KCNA1 (85%), Kv1.2/KCNA2 (91%), Kv1.3/KCNA3 (89%), Kv1.6/KCNA6 (94%), and Shaker (97%). The sequence is that of Potassium channel toxin alpha-KTx 4.1 from Tityus serrulatus (Brazilian scorpion).